A 201-amino-acid polypeptide reads, in one-letter code: MARYTGPATRKSRRLKVDLVGGDQAFERRPYPPGQHGRARIKETEYLLQLQEKQKAKFTYGVLERQFRSYYEEANRRPGKTGDNLLQVLECRLDNVVYRAGLARTRRMARQLVSHGHFTVNGKKVNIPSYQVSKWDIIDVKQKSLGTTPFIIAKETIGERPVPAWLQVVPSNLRILVHQRPERAQIDTPVTEQLIVELYSK.

An S4 RNA-binding domain is found at 91–157; that stretch reads CRLDNVVYRA…TPFIIAKETI (67 aa).

This sequence belongs to the universal ribosomal protein uS4 family. As to quaternary structure, part of the 30S ribosomal subunit. Contacts protein S5. The interaction surface between S4 and S5 is involved in control of translational fidelity.

Functionally, one of the primary rRNA binding proteins, it binds directly to 16S rRNA where it nucleates assembly of the body of the 30S subunit. With S5 and S12 plays an important role in translational accuracy. This is Small ribosomal subunit protein uS4 from Saccharopolyspora erythraea (strain ATCC 11635 / DSM 40517 / JCM 4748 / NBRC 13426 / NCIMB 8594 / NRRL 2338).